Here is a 364-residue protein sequence, read N- to C-terminus: Ribosomal RNA large subunit methyltransferase M (364 aa).

S-adenosyl-L-methionine-binding positions include S187, 220 to 223, D239, D259, and D276; that span reads CPGG. K305 serves as the catalytic Proton acceptor.

This sequence belongs to the class I-like SAM-binding methyltransferase superfamily. RNA methyltransferase RlmE family. RlmM subfamily. As to quaternary structure, monomer.

It localises to the cytoplasm. It catalyses the reaction cytidine(2498) in 23S rRNA + S-adenosyl-L-methionine = 2'-O-methylcytidine(2498) in 23S rRNA + S-adenosyl-L-homocysteine + H(+). Catalyzes the 2'-O-methylation at nucleotide C2498 in 23S rRNA. This Aeromonas salmonicida (strain A449) protein is Ribosomal RNA large subunit methyltransferase M.